The chain runs to 357 residues: Alternative oxidase, mitochondrial (357 aa).

A helical transmembrane segment spans residues 152 to 172; sequence LTRCIFLESIAGVPGAVASFI. Fe cation contacts are provided by E159, E198, and H201. Residues 218–238 traverse the membrane as a helical segment; it reads IIYVGQGVFCNLFFLFYLANP. Residues E249, E304, and H307 each coordinate Fe cation. Residues 330-357 are disordered; it reads IPDLKEPQPESGLKVTKPHGWEKEELKL. Positions 348 to 357 are enriched in basic and acidic residues; that stretch reads HGWEKEELKL.

Belongs to the alternative oxidase family. The cofactor is Fe cation.

It is found in the mitochondrion inner membrane. In terms of biological role, catalyzes cyanide-resistant oxygen consumption. May increase respiration when the cytochrome respiratory pathway is restricted, or in response to low temperatures. The sequence is that of Alternative oxidase, mitochondrial (STO1) from Scheffersomyces stipitis (strain ATCC 58785 / CBS 6054 / NBRC 10063 / NRRL Y-11545) (Yeast).